Consider the following 341-residue polypeptide: L-threonine 3-dehydrogenase (341 aa).

Zn(2+) is bound at residue Cys-38. Catalysis depends on charge relay system residues Thr-40 and His-43. Zn(2+) contacts are provided by His-63, Glu-64, Cys-93, Cys-96, Cys-99, and Cys-107. NAD(+) contacts are provided by residues Ile-175, Asp-195, Arg-200, Leu-262–Ile-264, and Ile-286–Tyr-287.

It belongs to the zinc-containing alcohol dehydrogenase family. As to quaternary structure, homotetramer. The cofactor is Zn(2+).

It is found in the cytoplasm. The catalysed reaction is L-threonine + NAD(+) = (2S)-2-amino-3-oxobutanoate + NADH + H(+). The protein operates within amino-acid degradation; L-threonine degradation via oxydo-reductase pathway; glycine from L-threonine: step 1/2. Its function is as follows. Catalyzes the NAD(+)-dependent oxidation of L-threonine to 2-amino-3-ketobutyrate. This is L-threonine 3-dehydrogenase from Solibacter usitatus (strain Ellin6076).